Reading from the N-terminus, the 664-residue chain is Protein-arginine deiminase type-3 (664 aa).

It belongs to the protein arginine deiminase family. Ca(2+) serves as cofactor. In terms of tissue distribution, epidermis and hair follicles.

It is found in the cytoplasm. The enzyme catalyses L-arginyl-[protein] + H2O = L-citrullyl-[protein] + NH4(+). Functionally, catalyzes the deimination of arginine residues of proteins. The polypeptide is Protein-arginine deiminase type-3 (Padi3) (Mus musculus (Mouse)).